A 159-amino-acid polypeptide reads, in one-letter code: Transcription elongation factor A protein-like 1 (159 aa).

Residues 1-99 (MDKPRKENEE…CGVGKHKLEE (99 aa)) are disordered. Over residues 17-34 (KTDEERPPVEHSPEKQSL) the composition is skewed to basic and acidic residues. The segment covering 37–54 (QSSEEQSSEEEFFPEELL) has biased composition (acidic residues). The segment covering 64–80 (SEERPPQEGLSRKDLFE) has biased composition (basic and acidic residues).

This sequence belongs to the TFS-II family. TFA subfamily.

It localises to the nucleus. Functionally, may be involved in transcriptional regulation. Modulates various viral and cellular promoters in a promoter context-dependent manner. Does not bind DNA directly. This chain is Transcription elongation factor A protein-like 1, found in Ateles geoffroyi (Black-handed spider monkey).